The sequence spans 418 residues: Nucleoside permease NupC (418 aa).

Helical transmembrane passes span 2 to 22 (IFSSLFSVVGMAVLFLIAWVF), 34 to 54 (IVSAFVIQVALGALALYVPLG), 93 to 113 (IGGFVFAINVLAIIIFFASLI), 174 to 194 (IFAVMCVGMASVAGPVLAGYA), 198 to 218 (IPLPYLIAASFMSAPGGLLFA), 264 to 284 (LLAFVGMLALINGLLGVVGGF), 292 to 314 (LGLILGTLLKPLAFMLGIPWSQA), 354 to 374 (AIITFALCGFANLSSVAMLIG), and 395 to 415 (VLVGTLSNFMSATIAGLFIGL).

This sequence belongs to the concentrative nucleoside transporter (CNT) (TC 2.A.41) family.

The protein resides in the cell inner membrane. Its function is as follows. Involved in purine nucleosides uptake. Could also be involved in uptake of nucleobases. This chain is Nucleoside permease NupC, found in Helicobacter pylori (strain ATCC 700392 / 26695) (Campylobacter pylori).